The primary structure comprises 85 residues: Beta-defensin 18 (85 aa).

An N-terminal signal peptide occupies residues 1 to 23 (MQSTMKMFGIILMVIFSVSCGPS). 3 cysteine pairs are disulfide-bonded: Cys-39-Cys-65, Cys-46-Cys-60, and Cys-50-Cys-66.

It belongs to the beta-defensin family.

The protein resides in the secreted. In terms of biological role, has antibacterial activity. The sequence is that of Beta-defensin 18 (Defb18) from Mus musculus (Mouse).